Here is a 79-residue protein sequence, read N- to C-terminus: Acyl carrier protein (79 aa).

The Carrier domain maps to 2 to 79; the sequence is ASKEEILAGL…QDAVDFIXGA (78 aa). Position 40 is an O-(pantetheine 4'-phosphoryl)serine (Ser40).

Belongs to the acyl carrier protein (ACP) family. In terms of processing, 4'-phosphopantetheine is transferred from CoA to a specific serine of apo-ACP by AcpS. This modification is essential for activity because fatty acids are bound in thioester linkage to the sulfhydryl of the prosthetic group.

The protein localises to the cytoplasm. It participates in lipid metabolism; fatty acid biosynthesis. Functionally, carrier of the growing fatty acid chain in fatty acid biosynthesis. The protein is Acyl carrier protein of Myxococcus xanthus.